A 6684-amino-acid chain; its full sequence is Replicase polyprotein 1ab (6684 aa).

One can recognise a CoV Nsp1 globular domain in the interval 2–108; that stretch reads SSKQFKILVN…DFDLKIARTG (107 aa). One can recognise a CoV Nsp2 N-terminal domain in the interval 111 to 349; the sequence is AIYVDQYMCG…KSLVACSVKR (239 aa). 4 residues coordinate Zn(2+): C240, C242, C259, and C260. Residues 240–260 form a C4 region; sequence CPCGSESSGVGDWTGFKTACC. The region spanning 378-773 is the CoV Nsp2 middle domain; sequence NVGLLFKKTP…CNAARNDIEI (396 aa). In terms of domain architecture, CoV Nsp2 C-terminal spans 768-879; sequence RNDIEIGGIP…VQRMYNKMGG (112 aa). Residues 882 to 983 enclose the Ubiquitin-like 1 domain; it reads KTVSFSEEVD…DGIMISQYDI (102 aa). Positions 989 to 1032 are disordered; it reads EKSEVSASSEEEEVESVEEDPENEIVEASEGAEGTSSQEEVETV. The segment covering 997–1015 has biased composition (acidic residues); that stretch reads SEEEEVESVEEDPENEIVE. Residues 1055–1299 enclose the Peptidase C16 1 domain; sequence PWAAAVDVQE…FKVEKVEQQP (245 aa). C1093 serves as the catalytic For PL1-PRO activity. Residues 1164-1195 form a C4-type 1; degenerate zinc finger; sequence CGCGEKEIVLERAVFKLTPLKESFNYGVCGDC. Residues H1244 and D1257 each act as for PL1-PRO activity in the active site. The region spanning 1318–1489 is the Macro domain; it reads NDDLILPFYK…TIENFFSCSI (172 aa). Residues 1486 to 1542 enclose the Ubiquitin-like 2 domain; the sequence is SCSIPVNVTEDNVNHERVSVSFDKTYGEQLKGTVVIKDKDVTNQLPSAFDVGQKVIK. Positions 1550-1803 constitute a Peptidase C16 2 domain; that stretch reads AHYGFRDAAA…KVAASPKIVQ (254 aa). Residue C1588 is the For PL2-PRO activity of the active site. C1667, C1670, C1694, and H1696 together coordinate Zn(2+). The segment at 1667–1696 adopts a C4-type 2; atypical zinc-finger fold; it reads CDKCAKVEKFVGPVVAAPLAIHGTDETCVH. Residues H1741 and D1754 each act as for PL2-PRO activity in the active site. Residues 1896–1916 form a helical membrane-spanning segment; sequence LVLLLIAIYNFFYLFVSIPVV. The segment at 1896 to 2053 is HD1; the sequence is LVLLLIAIYN…LALKHIVFAC (158 aa). Residues 1905 to 1970 form the 3Ecto domain; it reads NFFYLFVSIP…LQVTWDFKSD (66 aa). Cystine bridges form between C1921-C1948 and C1939-C1945. Helical transmembrane passes span 1995–2015 and 2033–2053; these read CFLM…FGYV and FVIV…VFAC. Residues 2044–2134 form a Y1 region; sequence LALKHIVFAC…SVKQTVYATD (91 aa). The CoV Nsp3 Y domain maps to 2044–2384; it reads LALKHIVFAC…PYERFTESVS (341 aa). Zn(2+) contacts are provided by H2048, C2053, C2058, C2061, C2094, H2097, C2101, and C2104. Residues 2048-2061 form a ZF1 region; that stretch reads HIVFACSNPSCKTC. A ZF2 region spans residues 2094–2104; it reads CKKHNFYCKNC. Residues 2135–2224 are Y2; sequence RSHQEVTKVE…IVNSDLLEDL (90 aa). The interval 2135–2384 is coV-Y; the sequence is RSHQEVTKVE…PYERFTESVS (250 aa). A Y3 region spans residues 2225-2281; that stretch reads SVDFKGALFNAKKNVIKNSFNVDVSECKNLDECYRACNLNVSFSTFEMAVNNAHRFG. Residues 2282-2384 form a Y4 region; the sequence is ILITDRSFNN…PYERFTESVS (103 aa). Transmembrane regions (helical) follow at residues 2401-2421, 2467-2487, 2497-2517, 2538-2558, 2666-2686, 2695-2715, 2721-2741, and 2746-2766; these read IVIL…YSVA, YGFI…VFDL, PAYV…AFGV, CVFN…VYCA, GAML…YGVL, CTFL…SYFV, FMII…YPGI, and FIIA…ILVF. An HD2 region spans residues 2401–2766; sequence IVILVFVFIF…YVITAYILVF (366 aa). Residues 2783–2878 form the Nsp4C domain; it reads LFEGDKFVGN…PTVSVNSTLQ (96 aa). In terms of domain architecture, Peptidase C30 spans 2879-3180; it reads SGLRKMAQPS…IRQMYGVNLQ (302 aa). Residues H2919 and C3022 each act as for 3CL-PRO activity in the active site. The next 8 helical transmembrane spans lie at 3187 to 3207, 3217 to 3237, 3242 to 3262, 3280 to 3300, 3313 to 3333, 3347 to 3367, 3371 to 3391, and 3394 to 3414; these read FFYP…EFFM, TFVS…VSGI, LFFM…NLFW, MFLP…IVFV, WFSL…IFGT, FVNM…VVIA, IAYY…FGFM, and ISIV…ILYW. Positions 3187-3414 are HD3; the sequence is FFYPIMTAMT…FCCYYGILYW (228 aa). Residues 3475 to 3557 form the RdRp Nsp7 cofactor domain; it reads SKLTEMKCTN…SYFENTTILQ (83 aa). In terms of domain architecture, RdRp Nsp8 cofactor spans 3558–3752; sequence SVASAYAALP…ITCERTTKLQ (195 aa). A Nsp9 ssRNA-binding domain is found at 3753-3863; sequence NNEIMPGKLK…GYIGATVRLQ (111 aa). Positions 3864 to 4004 constitute an ExoN/MTase coactivator domain; that stretch reads AGKPTEHPSN…TSMQSFTVDQ (141 aa). Zn(2+)-binding residues include C3937, C3940, H3946, C3953, C3979, C3982, C3990, and C3992. Zinc fingers lie at residues 3937 to 3953 and 3979 to 3992; these read CIYC…DGLC and CVVC…GCMC. The region spanning 4006-4255 is the NiRAN domain; the sequence is YLNRVRGSSA…ESENFVKSDI (250 aa). Residues 4261–4359 form the Nsp12 Interface domain; it reads KQYDLLAYDF…WNLDVKLDTM (99 aa). H4290, C4296, C4301, C4305, and C4482 together coordinate Zn(2+). A Nsp12 RNA-dependent RNA polymerase domain is found at 4360–4927; it reads KLSMTDLLRF…SLYEKSTVLQ (568 aa). The rdRp Fingers N-ter stretch occupies residues 4362–4576; the sequence is SMTDLLRFVT…HQKHLKSIAA (215 aa). The segment at 4577–4615 is rdRp Palm N-ter; that stretch reads TRNATVVIGSTKFYGGWDNMLKNLMRDVDNGCLMGWDYP. The 163-residue stretch at 4607–4769 folds into the RdRp catalytic domain; that stretch reads GCLMGWDYPK…CYNKDYADLG (163 aa). The segment at 4616–4674 is rdRp Fingers C-ter; sequence KCDRALPNMIRMASAMILGSKHVGCCTHNDRFYRLSNELAQVLTEVVHCTGGFYFKPGG. Zn(2+)-binding residues include H4637, C4640, and C4641. The rdRp Palm C-ter stretch occupies residues 4675–4810; sequence TTSGDGTTAY…SVGPHEFCSQ (136 aa). Catalysis depends on residues S4754, D4755, and D4756. Positions 4811–4927 are rdRp Thumb; it reads HTLQIVGPDG…SLYEKSTVLQ (117 aa). The 113-residue stretch at 4928–5040 folds into the CV ZBD domain; it reads AAGMCVVCGS…EDFNKLAVSD (113 aa). Zn(2+) is bound by residues C4932, C4935, C4943, C4946, C4953, C4956, H4960, H4966, C4977, C4982, C4999, and H5002. A (+)RNA virus helicase ATP-binding domain is found at 5175 to 5366; that stretch reads NTISKLYPVF…MCTLGPDVFL (192 aa). Residue 5210–5217 coordinates ATP; it reads GPPGSGKS. One can recognise a (+)RNA virus helicase C-terminal domain in the interval 5367-5536; the sequence is HKCYRCPAEI…AKPETCGLFK (170 aa). Residues 5598-5812 enclose the ExoN domain; it reads LFCTRDFAMR…RCLAIHDCFV (215 aa). Active-site residues include D5616, E5618, and E5717. Residues C5733, C5735, C5751, H5754, H5782, C5786, and H5789 each coordinate Zn(2+). Residues H5793 and D5798 contribute to the active site. Residue C5804 coordinates Zn(2+). An N7-MTase domain is found at 5821–6042; sequence YPFIDNEEKI…MLWHGFVNSK (222 aa). 5856 to 5862 provides a ligand contact to S-adenosyl-L-methionine; that stretch reads DVGNPKG. Residues 5933–5947 are gpppA-binding; that stretch reads CNGGALYVNNHAFHT. Zn(2+) contacts are provided by C5971, C5988, C5999, and H6002. The Nsp15 N-terminal oligomerization domain occupies 6046-6106; that stretch reads SLENVAFNVV…NVAFELYAKR (61 aa). The AV-Nsp11N/CoV-Nsp15M domain occupies 6107 to 6224; the sequence is KLGLTPPLTI…IYVRKNGEYV (118 aa). A NendoU domain is found at 6241-6381; that stretch reads KPRSTMEEDF…ENSHIKTFYP (141 aa). Residues H6271, H6286, K6327, K6429, D6513, K6553, and E6586 contribute to the active site. Residues 6385–6681 form the Nidovirus-type SAM-dependent 2'-O-MTase domain; that stretch reads SAEWNPGYSM…KLLNFGNHFV (297 aa).

The protein belongs to the coronaviruses polyprotein 1ab family. As to quaternary structure, 3CL-PRO exists as monomer and homodimer. Eight copies of nsp7 and eight copies of nsp8 assemble to form a heterohexadecamer. Nsp9 is a dimer. Nsp10 forms a dodecamer. The cofactor is Mn(2+). Post-translationally, specific enzymatic cleavages in vivo by its own proteases yield mature proteins. 3CL-PRO is autocatalytically processed.

It is found in the host membrane. It localises to the host cytoplasm. The protein localises to the host perinuclear region. The protein resides in the host endoplasmic reticulum-Golgi intermediate compartment. It carries out the reaction Thiol-dependent hydrolysis of ester, thioester, amide, peptide and isopeptide bonds formed by the C-terminal Gly of ubiquitin (a 76-residue protein attached to proteins as an intracellular targeting signal).. The enzyme catalyses RNA(n) + a ribonucleoside 5'-triphosphate = RNA(n+1) + diphosphate. It catalyses the reaction ATP + H2O = ADP + phosphate + H(+). The catalysed reaction is a 5'-end diphospho-ribonucleoside in mRNA + GTP + H(+) = a 5'-end (5'-triphosphoguanosine)-ribonucleoside in mRNA + diphosphate. It carries out the reaction a 5'-end (N(7)-methyl 5'-triphosphoguanosine)-ribonucleoside in mRNA + S-adenosyl-L-methionine = a 5'-end (N(7)-methyl 5'-triphosphoguanosine)-(2'-O-methyl-ribonucleoside) in mRNA + S-adenosyl-L-homocysteine + H(+). The enzyme catalyses uridylyl-uridylyl-ribonucleotide-RNA = a 3'-end uridylyl-2',3'-cyclophospho-uridine-RNA + a 5'-end dephospho-ribonucleoside-RNA. In terms of biological role, the replicase polyprotein of coronaviruses is a multifunctional protein: it contains the activities necessary for the transcription of negative stranded RNA, leader RNA, subgenomic mRNAs and progeny virion RNA as well as proteinases responsible for the cleavage of the polyprotein into functional products. Functionally, non-structural protein 1 inhibits host translation. By suppressing host gene expression, nsp1 facilitates efficient viral gene expression in infected cells and evasion from host immune response. Its function is as follows. The papain-like proteinase 1 (PLP1) and papain-like proteinase 2 (PLP2) are responsible for the cleavages located at the N-terminus of the replicase polyprotein. In addition, PLP2 possesses a deubiquitinating/deISGylating activity and processes both 'Lys-48'- and 'Lys-63'-linked polyubiquitin chains from cellular substrates. PLP2 also antagonizes innate immune induction of type I interferon by blocking the nuclear translocation of host IRF-3. Responsible for the majority of cleavages as it cleaves the C-terminus of replicase polyprotein at 11 sites. Recognizes substrates containing the core sequence [ILMVF]-Q-|-[SAGC]. Inhibited by the substrate-analog Cbz-Val-Asn-Ser-Thr-Leu-Gln-CMK. In terms of biological role, the helicase which contains a zinc finger structure displays RNA and DNA duplex-unwinding activities with 5' to 3' polarity. ATPase activity is strongly stimulated by poly(U), poly(dT), poly(C), poly(dA), but not by poly(G). Functionally, the exoribonuclease acts on both ssRNA and dsRNA in a 3' to 5' direction. Its function is as follows. Nsp7-nsp8 hexadecamer may possibly confer processivity to the polymerase, maybe by binding to dsRNA or by producing primers utilized by the latter. Forms a primer, NSP9-pU, which is utilized by the polymerase for the initiation of RNA chains. Interacts with ribosome signal recognition particle RNA (SRP). Together with NSP8, suppress protein integration into the cell membrane, thereby disrupting host immune defenses. In terms of biological role, RNA-directed RNA polymerase that catalyzes the transcription of viral genomic and subgenomic RNAs. Acts in complex with nsp7 and nsp8 to transcribe both the minus and positive strands of genomic RNA. The kinase-like NiRAN domain of NSP12 attaches one or more nucleotides to the amino terminus of NSP9, forming a covalent RNA-protein intermediate that serves as transcription/replication primer. Subgenomic RNAs (sgRNAs) are formed by discontinuous transcription: The polymerase has the ability to pause at transcription-regulating sequences (TRS) and jump to the leader TRS, resulting in a major deletion. This creates a series of subgenomic RNAs that are replicated, transcribed and translated. In addition, Nsp12 is a subunit of the viral RNA capping enzyme that catalyzes the RNA guanylyltransferase reaction for genomic and sub-genomic RNAs. Subsequently, the NiRAN domain transfers RNA to GDP, and forms the core cap structure GpppA-RNA. Functionally, plays a role in viral transcription/replication and prevents the simultaneous activation of host cell dsRNA sensors, such as MDA5/IFIH1, OAS, and PKR. Acts by degrading the 5'-polyuridines generated during replication of the poly(A) region of viral genomic and subgenomic RNAs. Catalyzes a two-step reaction in which a 2'3'-cyclic phosphate (2'3'-cP) is first generated by 2'-O transesterification, which is then hydrolyzed to a 3'-phosphate (3'-P). If not degraded, poly(U) RNA would hybridize with poly(A) RNA tails and activate host dsRNA sensors. This chain is Replicase polyprotein 1ab (rep), found in Sus scrofa (Pig).